The primary structure comprises 193 residues: Anthranilate synthase component 2 (193 aa).

A Glutamine amidotransferase type-1 domain is found at 3–193 (NILFLDNFDS…QQSIEWLLNR (191 aa)). 57-59 (GPG) contributes to the L-glutamine binding site. The Nucleophile; for GATase activity role is filled by Cys-84. L-glutamine-binding positions include Gln-88 and 134-135 (SL). Residues His-170 and Glu-172 each act as for GATase activity in the active site.

Heterotetramer consisting of two non-identical subunits: a beta subunit (TrpG) and a large alpha subunit (TrpE).

The catalysed reaction is chorismate + L-glutamine = anthranilate + pyruvate + L-glutamate + H(+). It participates in amino-acid biosynthesis; L-tryptophan biosynthesis; L-tryptophan from chorismate: step 1/5. Part of a heterotetrameric complex that catalyzes the two-step biosynthesis of anthranilate, an intermediate in the biosynthesis of L-tryptophan. In the first step, the glutamine-binding beta subunit (TrpG) of anthranilate synthase (AS) provides the glutamine amidotransferase activity which generates ammonia as a substrate that, along with chorismate, is used in the second step, catalyzed by the large alpha subunit of AS (TrpE) to produce anthranilate. In the absence of TrpG, TrpE can synthesize anthranilate directly from chorismate and high concentrations of ammonia. This chain is Anthranilate synthase component 2 (trpG), found in Haemophilus influenzae (strain ATCC 51907 / DSM 11121 / KW20 / Rd).